We begin with the raw amino-acid sequence, 341 residues long: Ferredoxin--NADP reductase (341 aa).

FAD is bound by residues Asp-38, Gln-46, Tyr-51, Val-91, Phe-125, Asp-292, and Thr-333.

It belongs to the ferredoxin--NADP reductase type 2 family. Homodimer. FAD serves as cofactor.

It carries out the reaction 2 reduced [2Fe-2S]-[ferredoxin] + NADP(+) + H(+) = 2 oxidized [2Fe-2S]-[ferredoxin] + NADPH. The protein is Ferredoxin--NADP reductase of Gluconacetobacter diazotrophicus (strain ATCC 49037 / DSM 5601 / CCUG 37298 / CIP 103539 / LMG 7603 / PAl5).